The chain runs to 215 residues: MNLVLMGLPGAGKGTQAAKIIEDYAIPHISTGDMFRAAIKDQTPLGQEAKSYMDKGELVPDEVTIGIVRERLAKEDCANGFLLDGFPRTVKQADALEVLLADLNKQIDHVVHIGVNPEKLVPRLTGRRICPTCGATYHVIYNPPKVEGVCDIDGSALVQREDDQEETVRRRLEVNVAQAQPLIDFYAEKGYLRNLDGDRPINEVYSDVQALLGGQ.

10–15 provides a ligand contact to ATP; it reads GAGKGT. Residues 30-59 are NMP; it reads STGDMFRAAIKDQTPLGQEAKSYMDKGELV. AMP is bound by residues Thr-31, Arg-36, 57–59, 85–88, and Gln-92; these read ELV and GFPR. Positions 126-163 are LID; that stretch reads GRRICPTCGATYHVIYNPPKVEGVCDIDGSALVQREDD. Position 127 (Arg-127) interacts with ATP. Zn(2+)-binding residues include Cys-130 and Cys-133. 136–137 lines the ATP pocket; sequence TY. 2 residues coordinate Zn(2+): Cys-150 and Asp-153. The AMP site is built by Arg-160 and Arg-171. ATP is bound at residue Arg-199.

Belongs to the adenylate kinase family. As to quaternary structure, monomer.

It is found in the cytoplasm. The catalysed reaction is AMP + ATP = 2 ADP. Its pathway is purine metabolism; AMP biosynthesis via salvage pathway; AMP from ADP: step 1/1. Catalyzes the reversible transfer of the terminal phosphate group between ATP and AMP. Plays an important role in cellular energy homeostasis and in adenine nucleotide metabolism. This is Adenylate kinase from Exiguobacterium sibiricum (strain DSM 17290 / CCUG 55495 / CIP 109462 / JCM 13490 / 255-15).